Reading from the N-terminus, the 1064-residue chain is Leucine--tRNA ligase (1064 aa).

The interval 1–25 (MARAMSETAEPGARTGAADTTVAPT) is disordered. The 'HIGH' region motif lies at 106–117 (PYPSGSGLHVGH). The interval 435–456 (GRPGGGTEPADTAGPEAGADPA) is disordered. The 'KMSKS' region signature appears at 831–835 (KMGKS). K834 is a binding site for ATP.

This sequence belongs to the class-I aminoacyl-tRNA synthetase family.

It is found in the cytoplasm. It carries out the reaction tRNA(Leu) + L-leucine + ATP = L-leucyl-tRNA(Leu) + AMP + diphosphate. The protein is Leucine--tRNA ligase of Frankia casuarinae (strain DSM 45818 / CECT 9043 / HFP020203 / CcI3).